Here is a 1391-residue protein sequence, read N- to C-terminus: Axoneme-associated protein mst101(2) (1391 aa).

2 disordered regions span residues 170–213 (ECNQ…GKKL) and 280–300 (SSEP…EKEL). The span at 184–201 (TKKGKTKGKSGGGNKKRS) shows a compositional bias: basic residues. Positions 291–300 (KNDEKKEKEL) are enriched in basic and acidic residues. 59 tandem repeats follow at residues 332 to 347 (KKKC…EEAE), 348 to 363 (KKKC…EEDE), 364 to 379 (KKAC…EADE), 380 to 395 (KKKC…KAAE), 396 to 411 (KKKC…EAAE), 412 to 427 (KKKC…EAAE), 428 to 443 (RKKC…KAAE), 444 to 459 (KKKC…EAAE), 460 to 475 (RKKC…KAAE), 476 to 491 (KKKC…EVAE), 492 to 507 (RKKC…KAEI), 508 to 523 (KKKC…ETAE), 524 to 539 (KKKC…EAAE), 540 to 555 (KKKC…EAAE), 556 to 571 (KKKC…EAAE), 572 to 587 (KKKC…EAAE), 588 to 603 (KKKC…EVAE), 604 to 619 (RKKC…KAAE), 620 to 635 (KKKC…EAAE), 636 to 651 (REKC…KAAE), 652 to 667 (KKKC…ETAE), 668 to 683 (KKKC…EAAE), 684 to 699 (KKKC…EAAE), 700 to 715 (KKKC…EAAE), 716 to 731 (RKKC…KAAE), 732 to 747 (KKKC…AGEK), 748 to 763 (NKLK…ALKE), 764 to 779 (KKKC…AEKK), 780 to 795 (KCKE…AEKK), 796 to 811 (KCEK…AEKK), 812 to 827 (KCEK…AEKK), 828 to 843 (KCEK…AEKK), 844 to 859 (KCEK…AEKK), 860 to 875 (KCEK…AEKK), 876 to 891 (KCEK…AEKK), 892 to 907 (KCAE…AEKK), 908 to 923 (KCEE…AERK), 924 to 939 (KCEE…AEKK), 940 to 955 (KCKK…GEKN), 956 to 971 (KLKK…CKKL), 972 to 987 (GKKS…CAEA), 988 to 1003 (AKKE…CEER), 1004 to 1019 (AKKQ…CEER), 1020 to 1035 (AKKL…CEER), 1036 to 1051 (AKKL…CEER), 1052 to 1067 (AKKL…CEER), 1068 to 1083 (AKKL…CEER), 1084 to 1099 (AKKE…CEER), 1100 to 1115 (AKKL…CEER), 1116 to 1131 (AKKE…CEEA), 1132 to 1147 (AKRE…CAEA), 1148 to 1163 (AKKE…CAEA), 1164 to 1179 (AKKE…CAEA), 1180 to 1195 (AKRE…CADL), 1196 to 1211 (AKKE…CEEA), 1212 to 1227 (AKKE…CAKA), 1228 to 1243 (AKKE…CAEA), 1244 to 1259 (AKKE…CAEA), and 1260 to 1275 (AKKE…CEKA). The 59 X 16 AA approximate tandem repeats of [KR]-K-X-C-X-X-X-A-K-X-X-K-X-X-X-E stretch occupies residues 332–1275 (KKKCKDLGRK…AEKKRKCEKA (944 aa)). The segment at 370–429 (LAKKKKEADEKKKCEEAANKEKKAAEKKKCEKAAKERKEAAEKKKCEEAAKKEKEAAERK) is disordered. Residues 516 to 577 (KKEKETAEKK…EAAEKKKCEK (62 aa)) form a disordered region. Residues 517–577 (KEKETAEKKK…EAAEKKKCEK (61 aa)) are compositionally biased toward basic and acidic residues. A compositionally biased stretch (basic residues) spans 729-765 (AAEKKKCKKLAKKKKAGEKNKLKKGNKKGKKALKEKK). Disordered regions lie at residues 729–881 (AAEK…EKAA), 900–922 (EKEL…VAER), and 934–1013 (KAAE…AAEK). Over residues 766-881 (KCRELAKKKA…AEKKKCEKAA (116 aa)) the composition is skewed to basic and acidic residues. Composition is skewed to basic residues over residues 934–949 (KAAE…KKEK) and 956–976 (KLKK…KKSK). Basic and acidic residues predominate over residues 977-1013 (RAAEKKKCAEAAKKEKEAATKKKCEERAKKQKEAAEK). Disordered stretches follow at residues 1076–1095 (EKKQ…EKKQ) and 1104–1212 (KEAA…EEAA). Over residues 1353 to 1370 (KKEKEAAEKKKRCKDLAK) the composition is skewed to basic and acidic residues. Residues 1353 to 1391 (KKEKEAAEKKKRCKDLAKNKKKGHKKKGRNENRKKRTDC) are disordered. Residues 1371-1391 (NKKKGHKKKGRNENRKKRTDC) are compositionally biased toward basic residues.

Testis. Primary spermatocytes and early spermatids.

It localises to the cytoplasm. Functionally, possible structural role in the sperm tail. The sequence is that of Axoneme-associated protein mst101(2) (mst101(2)) from Drosophila hydei (Fruit fly).